The following is a 520-amino-acid chain: MPRKKGAAWEEPSSGNGTARAGPRRRGGPAGRKRERPERCSSSSGGGSSGDEDGPELDGAPGGGKRTARPATAGKAAGAAAIITEPEHTKERVKLEGSKCKGQLLIFGATNWDLIGRKEVPKQQAAYRNLGQNLWGPHRYGCLSGVRVRTVVSGSCAAHSLLITTEGKLWSWGRNEKGQLGHGDTKRVEAPRLIEALSHEAIVLAACGRNHTLALTDTGSVFAFGENKMGQLGLGNQTDAVPSPAQIMYNGQPITKMACGAEFSMLMDCKGNLYSFGCPEYGQLGHNSDGKFIARAQRIEYDCELVPRRVAIFIEKTKDGQILPVPNVVVRDVACGANHTLVLDSQKRVFSWGFGGYGRLGHAEQKDEMVPRLVKLFDFPGRGATQIYAGYTCSFAVSEVGGLFFWGATNTSRESTMYPKAVQDLCGWRIRSLACGKSSIIVAADESTISWGPSPTFGELGYGDHKPKSSTAAQEVKTLDGIFSEQVAMGYSHSLVIARDESEAEKEKLQRLPEYTPRTL.

Residues 1 to 78 form a disordered region; the sequence is MPRKKGAAWE…RPATAGKAAG (78 aa). A Phosphoserine modification is found at serine 14. Threonine 18 carries the phosphothreonine modification. Over residues 22 to 34 the composition is skewed to basic residues; the sequence is GPRRRGGPAGRKR. Residues serine 41, serine 42, serine 43, serine 44, serine 48, and serine 49 each carry the phosphoserine modification. Low complexity predominate over residues 69 to 78; the sequence is RPATAGKAAG. Lysine 90 and lysine 122 each carry N6-acetyllysine. 7 RCC1 repeats span residues 101–163, 166–217, 219–269, 271–345, 346–399, 401–445, and 446–499; these read KGQL…SLLI, EGKL…ALTD, GSVF…LMDC, GNLY…VLDS, QKRV…AVSE, GGLF…VAAD, and ESTI…VIAR. Lysine 291 is modified (N6-acetyllysine). Positions 316–323 are required for interaction with RAC1; the sequence is KTKDGQIL. At threonine 340 the chain carries Phosphothreonine. Residue lysine 375 is modified to N6-acetyllysine.

In terms of assembly, interacts with RAC1. Interacts with nucleotide-free and with GDP and GTP-bound forms of RAC1, with a slight preference for GDP-bound RAC1. Binds preferentially to the nucleotide-free form of RAC1. Interacts with CORO1C. Interacts with microtubules.

The protein resides in the nucleus. The protein localises to the nucleolus. Its subcellular location is the cytoplasm. It localises to the cytoskeleton. It is found in the chromosome. The protein resides in the centromere. The protein localises to the spindle. Its subcellular location is the midbody. It localises to the cell membrane. In terms of biological role, multifunctional protein that may affect its functions by regulating the activity of small GTPases, such as RAC1 and RALA. Required for normal progress through the cell cycle, both during interphase and during mitosis. Required for the presence of normal levels of MAD2L1, AURKB and BIRC5 on inner centromeres during mitosis, and for normal attachment of kinetochores to mitotic spindles. Required for normal organization of the microtubule cytoskeleton in interphase cells. Functions as a guanine nucleotide exchange factor (GEF) for RALA. Interferes with the activation of RAC1 by guanine nucleotide exchange factors. Prevents accumulation of active, GTP-bound RAC1, and suppresses RAC1-mediated reorganization of the actin cytoskeleton and formation of membrane protrusions. Required for normal cellular responses to contacts with the extracellular matrix of adjacent cells, and for directional cell migration in response to a fibronectin gradient (in vitro). This Mus musculus (Mouse) protein is Protein RCC2 (Rcc2).